The primary structure comprises 199 residues: Superoxide dismutase [Mn/Fe] (199 aa).

Residues His-27, His-81, Asp-161, and His-165 each contribute to the Fe(3+) site. His-27, His-81, Asp-161, and His-165 together coordinate Mn(2+).

This sequence belongs to the iron/manganese superoxide dismutase family. Homodimer. The cofactor is Mn(2+). It depends on Fe(3+) as a cofactor.

It carries out the reaction 2 superoxide + 2 H(+) = H2O2 + O2. Functionally, destroys superoxide anion radicals which are normally produced within the cells and which are toxic to biological systems. Catalyzes the dismutation of superoxide anion radicals into O2 and H2O2 by successive reduction and oxidation of the transition metal ion at the active site. The chain is Superoxide dismutase [Mn/Fe] (sodA) from Staphylococcus saprophyticus subsp. saprophyticus (strain ATCC 15305 / DSM 20229 / NCIMB 8711 / NCTC 7292 / S-41).